We begin with the raw amino-acid sequence, 130 residues long: Small ribosomal subunit protein uS8 (130 aa).

Belongs to the universal ribosomal protein uS8 family. Part of the 30S ribosomal subunit.

One of the primary rRNA binding proteins, it binds directly to 16S rRNA central domain where it helps coordinate assembly of the platform of the 30S subunit. The sequence is that of Small ribosomal subunit protein uS8 from Methanosarcina mazei (strain ATCC BAA-159 / DSM 3647 / Goe1 / Go1 / JCM 11833 / OCM 88) (Methanosarcina frisia).